A 536-amino-acid polypeptide reads, in one-letter code: Xylulose kinase (536 aa).

Residues His99, Arg170, Asp280, and Asn281 each coordinate substrate. ATP contacts are provided by residues Trp355, 441–442, and Asn445; that span reads GA.

The protein belongs to the FGGY kinase family. As to quaternary structure, monomer.

It catalyses the reaction D-xylulose + ATP = D-xylulose 5-phosphate + ADP + H(+). Functionally, phosphorylates D-xylulose to produce D-xylulose 5-phosphate, a molecule that may play an important role in the regulation of glucose metabolism and lipogenesis. The chain is Xylulose kinase (XYLB) from Homo sapiens (Human).